The sequence spans 336 residues: Atypical chemokine receptor 1 (336 aa).

A mediates Plasmodium vivax Duffy receptor (PVDR) binding region spans residues 1–30 (MGNCLHRAELSPSTENSSQLDFEDVWNSSY). The Extracellular portion of the chain corresponds to 1 to 63 (MGNCLHRAEL…CNLLDDSALP (63 aa)). A glycan (N-linked (GlcNAc...) asparagine) is linked at Asn16. Tyr30 bears the Sulfotyrosine mark. Asn33 carries an N-linked (GlcNAc...) asparagine glycan. Tyr41 is modified (sulfotyrosine). 2 cysteine pairs are disulfide-bonded: Cys51-Cys276 and Cys129-Cys195. A helical transmembrane segment spans residues 64-84 (FFILTSVLGILASSTVLFMLF). The Cytoplasmic portion of the chain corresponds to 85 to 95 (RPLFRWQLCPG). Residues 96–116 (WPVLAQLAVGSALFSIVVPVL) traverse the membrane as a helical segment. Topologically, residues 117–129 (APGLGSTRSSALC) are extracellular. Residues 130–153 (SLGYCVWYGSAFAQALLLGCHASL) form a helical membrane-spanning segment. At 154–166 (GHRLGAGQVPGLT) the chain is on the cytoplasmic side. A helical membrane pass occupies residues 167–187 (LGLTVGIWGVAALLTLPVTLA). The Extracellular portion of the chain corresponds to 188 to 207 (SGASGGLCTLIYSTELKALQ). A helical membrane pass occupies residues 208–228 (ATHTVACLAIFVLLPLGLFGA). The Cytoplasmic portion of the chain corresponds to 229 to 244 (KGLKKALGMGPGPWMN). Residues 245–265 (ILWAWFIFWWPHGVVLGLDFL) traverse the membrane as a helical segment. Topologically, residues 266-287 (VRSKLLLLSTCLAQQALDLLLN) are extracellular. A helical transmembrane segment spans residues 288 to 308 (LAEALAILHCVATPLLLALFC). The Cytoplasmic segment spans residues 309 to 336 (HQATRTLLPSLPLPEGWSSHLDTLGSKS).

The protein belongs to the G-protein coupled receptor 1 family. Atypical chemokine receptor subfamily. As to quaternary structure, (Microbial infection) Interacts (via N-terminal extracellular domain) with Plasmodium vivax Duffy receptor (PVDR) (via PvRII region). In terms of assembly, (Microbial infection) Interacts (via N-terminal extracellular domain) with Plasmodium knowlesi Duffy receptor alpha form (DBPalpha) (via region II). Post-translationally, sulfation at Tyr-41 facilitates interaction with MGSA/CXCL1, RANTES/CCL5 and MCP-1/CCL2 but not IL8/CXCL8. Sulfation at Tyr-30 facilitates interaction with IL8/CXCL8. In terms of processing, (Microbial infection) Sulfation at Tyr-41 facilitates interaction with Plasmodium vivax Duffy receptor (PVDR). Sulfation at Tyr-30/Tyr-41 and Tyr-41 alone increases binding affinity of Plasmodium vivax parasites and likely promotes invasion of red blood cells. (Microbial infection) Sulfation at Tyr-41 facilitates interaction with Plasmodium knowlesi Duffy receptor alpha form (DBPalpha). Sulfation at Tyr-30/Tyr-41 and Tyr-41 alone increases binding affinity of Plasmodium knowlesi parasites and likely promotes invasion of red blood cells. As to expression, found in adult kidney, adult spleen, bone marrow and fetal liver. In particular, it is expressed along postcapillary venules throughout the body, except in the adult liver. Erythroid cells and postcapillary venule endothelium are the principle tissues expressing duffy. Fy(-A-B) individuals do not express duffy in the bone marrow, however they do, in postcapillary venule endothelium.

The protein resides in the early endosome. It localises to the recycling endosome. The protein localises to the membrane. Its function is as follows. Atypical chemokine receptor that controls chemokine levels and localization via high-affinity chemokine binding that is uncoupled from classic ligand-driven signal transduction cascades, resulting instead in chemokine sequestration, degradation, or transcytosis. Also known as interceptor (internalizing receptor) or chemokine-scavenging receptor or chemokine decoy receptor. Has a promiscuous chemokine-binding profile, interacting with inflammatory chemokines of both the CXC and the CC subfamilies but not with homeostatic chemokines. Acts as a receptor for chemokines including CCL2, CCL5, CCL7, CCL11, CCL13, CCL14, CCL17, CXCL5, CXCL6, IL8/CXCL8, CXCL11, GRO, RANTES, MCP-1 and TARC. May regulate chemokine bioavailability and, consequently, leukocyte recruitment through two distinct mechanisms: when expressed in endothelial cells, it sustains the abluminal to luminal transcytosis of tissue-derived chemokines and their subsequent presentation to circulating leukocytes; when expressed in erythrocytes, serves as blood reservoir of cognate chemokines but also as a chemokine sink, buffering potential surges in plasma chemokine levels. (Microbial infection) Acts as a receptor for the malaria parasite Plasmodium vivax. Functionally, (Microbial infection) Acts as a receptor for the malaria parasite Plasmodium knowlesi. The sequence is that of Atypical chemokine receptor 1 (ACKR1) from Homo sapiens (Human).